Consider the following 146-residue polypeptide: Large ribosomal subunit protein uL15 (146 aa).

Positions M1–R13 are enriched in basic and acidic residues. The interval M1–M55 is disordered. A compositionally biased stretch (gly residues) spans T23 to Q35.

It belongs to the universal ribosomal protein uL15 family. As to quaternary structure, part of the 50S ribosomal subunit.

In terms of biological role, binds to the 23S rRNA. This chain is Large ribosomal subunit protein uL15, found in Lactobacillus acidophilus (strain ATCC 700396 / NCK56 / N2 / NCFM).